Reading from the N-terminus, the 210-residue chain is Imidazole glycerol phosphate synthase subunit HisH (210 aa).

Residues 3–208 form the Glutamine amidotransferase type-1 domain; it reads PIAIIDYGMG…GELVRHAGNA (206 aa). Catalysis depends on C81, which acts as the Nucleophile. Residues H183 and E185 contribute to the active site.

In terms of assembly, heterodimer of HisH and HisF.

Its subcellular location is the cytoplasm. It catalyses the reaction 5-[(5-phospho-1-deoxy-D-ribulos-1-ylimino)methylamino]-1-(5-phospho-beta-D-ribosyl)imidazole-4-carboxamide + L-glutamine = D-erythro-1-(imidazol-4-yl)glycerol 3-phosphate + 5-amino-1-(5-phospho-beta-D-ribosyl)imidazole-4-carboxamide + L-glutamate + H(+). It carries out the reaction L-glutamine + H2O = L-glutamate + NH4(+). Its pathway is amino-acid biosynthesis; L-histidine biosynthesis; L-histidine from 5-phospho-alpha-D-ribose 1-diphosphate: step 5/9. In terms of biological role, IGPS catalyzes the conversion of PRFAR and glutamine to IGP, AICAR and glutamate. The HisH subunit catalyzes the hydrolysis of glutamine to glutamate and ammonia as part of the synthesis of IGP and AICAR. The resulting ammonia molecule is channeled to the active site of HisF. This Moorella thermoacetica (strain ATCC 39073 / JCM 9320) protein is Imidazole glycerol phosphate synthase subunit HisH.